Consider the following 338-residue polypeptide: Fructose-1,6-bisphosphatase class 1 (338 aa).

4 residues coordinate Mg(2+): Glu91, Asp113, Leu115, and Asp116. Substrate-binding positions include 116–119, Asn211, Tyr244, and Lys277; that span reads DGSS. Glu283 serves as a coordination point for Mg(2+).

This sequence belongs to the FBPase class 1 family. Homotetramer. Mg(2+) serves as cofactor.

It localises to the cytoplasm. It catalyses the reaction beta-D-fructose 1,6-bisphosphate + H2O = beta-D-fructose 6-phosphate + phosphate. It functions in the pathway carbohydrate biosynthesis; gluconeogenesis. This is Fructose-1,6-bisphosphatase class 1 from Oleidesulfovibrio alaskensis (strain ATCC BAA-1058 / DSM 17464 / G20) (Desulfovibrio alaskensis).